Consider the following 169-residue polypeptide: Protein-export protein SecB (169 aa).

This sequence belongs to the SecB family. Homotetramer, a dimer of dimers. One homotetramer interacts with 1 SecA dimer.

Its subcellular location is the cytoplasm. One of the proteins required for the normal export of preproteins out of the cell cytoplasm. It is a molecular chaperone that binds to a subset of precursor proteins, maintaining them in a translocation-competent state. It also specifically binds to its receptor SecA. This Pseudoalteromonas atlantica (strain T6c / ATCC BAA-1087) protein is Protein-export protein SecB.